The sequence spans 252 residues: 3-dehydroquinate dehydratase (252 aa).

Residues Ser-21, 46–48 (EWR), and Arg-82 contribute to the 3-dehydroquinate site. His-143 (proton donor/acceptor) is an active-site residue. Lys-170 acts as the Schiff-base intermediate with substrate in catalysis. 3-dehydroquinate is bound by residues Arg-213, Ser-232, and Gln-236.

The protein belongs to the type-I 3-dehydroquinase family. In terms of assembly, homodimer.

It catalyses the reaction 3-dehydroquinate = 3-dehydroshikimate + H2O. The protein operates within metabolic intermediate biosynthesis; chorismate biosynthesis; chorismate from D-erythrose 4-phosphate and phosphoenolpyruvate: step 3/7. Involved in the third step of the chorismate pathway, which leads to the biosynthesis of aromatic amino acids. Catalyzes the cis-dehydration of 3-dehydroquinate (DHQ) and introduces the first double bond of the aromatic ring to yield 3-dehydroshikimate. In Shigella dysenteriae, this protein is 3-dehydroquinate dehydratase.